A 71-amino-acid chain; its full sequence is Protein KleB (71 aa).

Positions 9–28 (IETCCRRCGKSIRTLSHTII) form a DNA-binding region, H-T-H motif.

The polypeptide is Protein KleB (kleB) (Escherichia coli).